Reading from the N-terminus, the 604-residue chain is Elongation factor 4 (604 aa).

Positions 10 to 191 constitute a tr-type G domain; that stretch reads KNIRNFSIIA…KIITTIPAPS (182 aa). Residues 22-27 and 138-141 contribute to the GTP site; these read DHGKST and NKID.

It belongs to the TRAFAC class translation factor GTPase superfamily. Classic translation factor GTPase family. LepA subfamily.

Its subcellular location is the cell inner membrane. It carries out the reaction GTP + H2O = GDP + phosphate + H(+). Its function is as follows. Required for accurate and efficient protein synthesis under certain stress conditions. May act as a fidelity factor of the translation reaction, by catalyzing a one-codon backward translocation of tRNAs on improperly translocated ribosomes. Back-translocation proceeds from a post-translocation (POST) complex to a pre-translocation (PRE) complex, thus giving elongation factor G a second chance to translocate the tRNAs correctly. Binds to ribosomes in a GTP-dependent manner. The sequence is that of Elongation factor 4 from Helicobacter pylori (strain J99 / ATCC 700824) (Campylobacter pylori J99).